The chain runs to 81 residues: MSQKSVVLHLYRSLVRESKKFSSYNFREYSLRRVSVGFRENKNKDQNETKELIQDALKNLEMVKRQAFINSMYSTNKLVVE.

The protein belongs to the complex I LYR family.

It is found in the mitochondrion. The protein resides in the nucleus. Its pathway is cofactor biosynthesis; iron-sulfur cluster biosynthesis. Its function is as follows. Required for nuclear and mitochondrial iron-sulfur protein biosynthesis. In Dictyostelium discoideum (Social amoeba), this protein is LYR motif-containing protein 4 (lyrm4).